The chain runs to 453 residues: Nuclear hormone receptor family member nhr-12 (453 aa).

The segment at 1 to 37 (MEQIPQEQKTEPFLASFTTTEKLGTETPTTSITPNTQ) is disordered. The segment covering 18–36 (TTTEKLGTETPTTSITPNT) has biased composition (low complexity). A DNA-binding region (nuclear receptor) is located at residues 44–119 (KPNCAVCNEV…VGMNPECVQN (76 aa)). 2 NR C4-type zinc fingers span residues 47–67 (CAVCNEVGDGLHFGAEACRAC) and 83–107 (CRAGRNCEVSSNIRCMCRSCRYDKC). Residues 178-451 (FSPASLPGLS…ENFVNIINGK (274 aa)) enclose the NR LBD domain.

The protein belongs to the nuclear hormone receptor family.

It localises to the nucleus. Its function is as follows. Orphan nuclear receptor. This chain is Nuclear hormone receptor family member nhr-12 (nhr-12), found in Caenorhabditis elegans.